Reading from the N-terminus, the 119-residue chain is MKRIAFVFSTAPHGTAAGREGLDALLATSALTDDLAVFFIADGVFQLLSGQKPDAVLARDYIATFKLLSLYDIEQCWVCAASLRERGLDPQTPFVVEATPLEADALRRELANYDVILRF.

The protein belongs to the DsrF/TusC family. Heterohexamer, formed by a dimer of trimers. The hexameric TusBCD complex contains 2 copies each of TusB, TusC and TusD. The TusBCD complex interacts with TusE.

Its subcellular location is the cytoplasm. Functionally, part of a sulfur-relay system required for 2-thiolation of 5-methylaminomethyl-2-thiouridine (mnm(5)s(2)U) at tRNA wobble positions. This is Protein TusC from Shigella flexneri serotype 5b (strain 8401).